A 695-amino-acid polypeptide reads, in one-letter code: DNA ligase (695 aa).

Residues 44–48 (DAEYD), 93–94 (SL), and Glu-123 each bind NAD(+). The active-site N6-AMP-lysine intermediate is the Lys-125. 4 residues coordinate NAD(+): Arg-146, Glu-184, Lys-300, and Lys-324. Cys-418, Cys-421, Cys-436, and Cys-442 together coordinate Zn(2+). Residues 605–694 (SAAKPLAGIT…PDAARSMAQR (90 aa)) enclose the BRCT domain.

Belongs to the NAD-dependent DNA ligase family. LigA subfamily. The cofactor is Mg(2+). Mn(2+) serves as cofactor.

It carries out the reaction NAD(+) + (deoxyribonucleotide)n-3'-hydroxyl + 5'-phospho-(deoxyribonucleotide)m = (deoxyribonucleotide)n+m + AMP + beta-nicotinamide D-nucleotide.. DNA ligase that catalyzes the formation of phosphodiester linkages between 5'-phosphoryl and 3'-hydroxyl groups in double-stranded DNA using NAD as a coenzyme and as the energy source for the reaction. It is essential for DNA replication and repair of damaged DNA. This Acidothermus cellulolyticus (strain ATCC 43068 / DSM 8971 / 11B) protein is DNA ligase.